We begin with the raw amino-acid sequence, 2241 residues long: Large tegument protein deneddylase (2241 aa).

The interval 1-238 is deubiquitination activity; the sequence is MKVTQASCHQ…IDLTGVVRES (238 aa). In terms of domain architecture, Peptidase C76 spans 4–226; the sequence is TQASCHQGDI…AARLVSTYRD (223 aa). Catalysis depends on residues C24, D160, and H162. The interval 239-314 is disordered; sequence ADTAATTTTA…STTSKTLATA (76 aa). Over residues 240–250 the composition is skewed to low complexity; that stretch reads DTAATTTTAAP. Over residues 251-268 the composition is skewed to pro residues; the sequence is SLPPLPDPIVDPGCPPGV. Over residues 304–314 the composition is skewed to low complexity; it reads PSTTSKTLATA. The interaction with inner tegument protein stretch occupies residues 327–331; that stretch reads SSAVP. Disordered stretches follow at residues 1187–1230 and 2118–2152; these read MTET…PPAD and PIAR…DTSR. Composition is skewed to basic and acidic residues over residues 1190-1199 and 2142-2152; these read TSERLDRSLR and QIDHAQDDTSR.

Belongs to the herpesviridae large tegument protein family. As to quaternary structure, interacts with host CUL1 and CUL4A; these interactions inhibit the E3 ligase activity of cullins. Interacts with inner tegument protein. Interacts with capsid vertex specific component CVC2. Interacts with the major capsid protein/MCP.

The protein localises to the virion tegument. It localises to the host cytoplasm. It is found in the host nucleus. The catalysed reaction is Thiol-dependent hydrolysis of ester, thioester, amide, peptide and isopeptide bonds formed by the C-terminal Gly of ubiquitin (a 76-residue protein attached to proteins as an intracellular targeting signal).. Its function is as follows. Large tegument protein that plays multiple roles in the viral cycle. During viral entry, remains associated with the capsid while most of the tegument is detached and participates in the capsid transport toward the host nucleus. Plays a role in the routing of the capsid at the nuclear pore complex and subsequent uncoating. Within the host nucleus, acts as a deneddylase and promotes the degradation of nuclear CRLs (cullin-RING ubiquitin ligases) and thereby stabilizes nuclear CRL substrates, while cytoplasmic CRLs remain unaffected. These modifications prevent host cell cycle S-phase progression and create a favorable environment allowing efficient viral genome replication. Participates later in the secondary envelopment of capsids. Indeed, plays a linker role for the association of the outer viral tegument to the capsids together with the inner tegument protein. The polypeptide is Large tegument protein deneddylase (UL48) (Homo sapiens (Human)).